Here is a 495-residue protein sequence, read N- to C-terminus: Type-1 histone deacetylase 1 (495 aa).

Position 94 (Asp-94) interacts with substrate. His-136 (proton acceptor) is an active-site residue. Gly-144 is a binding site for substrate. 3 residues coordinate a divalent metal cation: Asp-171, His-173, and Asp-259. Tyr-298 serves as a coordination point for substrate. Residues Pro-372–Gly-495 form a disordered region. Positions Asp-396 to Glu-413 are enriched in basic and acidic residues. Over residues Asn-425–Ile-443 the composition is skewed to polar residues. The segment covering Asn-454–Asn-480 has biased composition (low complexity).

Belongs to the histone deacetylase family. HD type 1 subfamily.

It localises to the nucleus. It is found in the cytoplasm. The catalysed reaction is N(6)-acetyl-L-lysyl-[histone] + H2O = L-lysyl-[histone] + acetate. Functionally, responsible for the deacetylation of lysine residues on the N-terminal part of the core histones (H2A, H2B, H3 and H4). Histone deacetylation plays an important role in transcriptional regulation, cell cycle progression and developmental events. Histone deacetylases act via the formation of large multiprotein complexes. The protein is Type-1 histone deacetylase 1 (hdaA) of Dictyostelium discoideum (Social amoeba).